We begin with the raw amino-acid sequence, 256 residues long: Thiazole synthase (256 aa).

Lys96 acts as the Schiff-base intermediate with DXP in catalysis. 1-deoxy-D-xylulose 5-phosphate is bound by residues Gly157, 184-185 (AG), and 206-207 (NT).

The protein belongs to the ThiG family. Homotetramer. Forms heterodimers with either ThiH or ThiS.

It localises to the cytoplasm. It carries out the reaction [ThiS sulfur-carrier protein]-C-terminal-Gly-aminoethanethioate + 2-iminoacetate + 1-deoxy-D-xylulose 5-phosphate = [ThiS sulfur-carrier protein]-C-terminal Gly-Gly + 2-[(2R,5Z)-2-carboxy-4-methylthiazol-5(2H)-ylidene]ethyl phosphate + 2 H2O + H(+). The protein operates within cofactor biosynthesis; thiamine diphosphate biosynthesis. Its function is as follows. Catalyzes the rearrangement of 1-deoxy-D-xylulose 5-phosphate (DXP) to produce the thiazole phosphate moiety of thiamine. Sulfur is provided by the thiocarboxylate moiety of the carrier protein ThiS. In vitro, sulfur can be provided by H(2)S. The chain is Thiazole synthase from Brucella anthropi (strain ATCC 49188 / DSM 6882 / CCUG 24695 / JCM 21032 / LMG 3331 / NBRC 15819 / NCTC 12168 / Alc 37) (Ochrobactrum anthropi).